The sequence spans 418 residues: AA14 family lytic polysaccharide monooxygenase B (418 aa).

Residues 1 to 18 form the signal peptide; sequence MIPVFLAAVAAFLPLTSG. Residues N31, N94, and N151 are each glycosylated (N-linked (GlcNAc...) asparagine). Disulfide bonds link C85/C108, C127/C154, C171/C176, and C178/C200. N-linked (GlcNAc...) asparagine glycans are attached at residues N201 and N235. Cysteines 220 and 236 form a disulfide. Over residues 307–343 the composition is skewed to low complexity; that stretch reads AAATPAPSSSGSSPSSSSPGSSSTASTTSTSGPRPSA. The segment at 307 to 364 is disordered; it reads AAATPAPSSSGSSPSSSSPGSSSTASTTSTSGPRPSARGFRRSTGERPPTGVPTPRKS.

It belongs to the polysaccharide monooxygenase AA14 family. It depends on Cu(2+) as a cofactor.

The protein localises to the secreted. Its function is as follows. Lytic polysaccharide monooxygenase (LPMO) that oxidatively cleaves xylan with both C1 and C4 regioselectivity and that specifically targets the protective shield made by heteroxylans that cover cellulose microfibrils in wood. Catalysis by LPMOs requires the reduction of the active-site copper from Cu(II) to Cu(I) by a reducing agent and H(2)O(2) or O(2) as a cosubstrate. Cleavage occurs only when xylans are bound to cellulose and not when they are in solution. Increases the efficiency of wood saccharification through oxidative cleavage of highly refractory xylan-coated cellulose fibers via synergistic relationship with xylan-active enzymes, xylobiohydrolases and cellobiohydrolases. This chain is AA14 family lytic polysaccharide monooxygenase B, found in Trametes coccinea (strain BRFM310) (Pycnoporus coccineus).